Here is a 195-residue protein sequence, read N- to C-terminus: CD70 antigen (195 aa).

Topologically, residues 1–23 (MPEEGRPCPWVRWSGTAFQRQWP) are cytoplasmic. A helical; Signal-anchor for type II membrane protein transmembrane segment spans residues 24–44 (WLLLVVFITVFCCWFHCSGLL). The Extracellular segment spans residues 45–195 (SKQQQRLLEH…TFFGVQWICP (151 aa)). In terms of domain architecture, THD spans 58 to 193 (HTAELQLNLT…DETFFGVQWI (136 aa)). N-linked (GlcNAc...) asparagine glycosylation is found at Asn65 and Asn116. 2 disulfide bridges follow: Cys117-Cys153 and Cys135-Cys170. N-linked (GlcNAc...) asparagine glycosylation occurs at Asn172.

This sequence belongs to the tumor necrosis factor family. In terms of assembly, homotrimer. N-glycosylated. As to expression, very low level of expression. Detected in splenocytes and thymocytes.

The protein resides in the cell membrane. Its function is as follows. Expressed at the plasma membrane of B cells, it is the ligand of the CD27 receptor which is specifically expressed at the surface of T cells. The CD70-CD27 signaling pathway mediates antigen-specific T cell activation and expansion which in turn provides immune surveillance of B cells. The sequence is that of CD70 antigen from Mus musculus (Mouse).